Reading from the N-terminus, the 483-residue chain is Sphingomyelin phosphodiesterase 5 (483 aa).

The segment at 1 to 20 (MSLPDISRRRSPVPQEDWPL) is disordered. Residues 80–100 (VLLPLVVVGLPLALVGLALWL) form a helical membrane-spanning segment. Mg(2+) is bound at residue Glu-209. The active-site Proton acceptor is His-471.

This sequence belongs to the neutral sphingomyelinase family. Requires Mg(2+) as cofactor. It depends on Mn(2+) as a cofactor. In terms of tissue distribution, highly expressed in testis, pancreas, epididymis, and brain.

It localises to the mitochondrion inner membrane. Its subcellular location is the endoplasmic reticulum membrane. It carries out the reaction a sphingomyelin + H2O = phosphocholine + an N-acylsphing-4-enine + H(+). The enzyme catalyses N-(hexadecanoyl)-sphing-4-enine-1-phosphocholine + H2O = N-hexadecanoylsphing-4-enine + phosphocholine + H(+). It functions in the pathway lipid metabolism; sphingolipid metabolism. Its activity is regulated as follows. Activated by anionic phospholipids, specially cardiolipin and phosphatidylserine. Its function is as follows. Catalyzes the hydrolysis of membrane sphingomyelin to form phosphorylcholine and ceramide. The polypeptide is Sphingomyelin phosphodiesterase 5 (Mus musculus (Mouse)).